The primary structure comprises 685 residues: Sodium-dependent phosphate transporter 1 (685 aa).

6 consecutive transmembrane segments (helical) span residues 25 to 45 (FLWM…SVGA), 66 to 86 (ACIL…AKVS), 106 to 126 (LMAG…AASF), 162 to 182 (IVLS…LLFY), 201 to 221 (ALPI…MYSG), and 234 to 254 (GIIL…WFFV). The segment covering 482 to 492 (VEAEEQEEGSI) has biased composition (acidic residues). The interval 482–513 (VEAEEQEEGSIEDVATDRKSSSSSLEERHDQD) is disordered. A compositionally biased stretch (basic and acidic residues) spans 496–513 (ATDRKSSSSSLEERHDQD). 4 helical membrane passes run 517–537 (VSLL…FAHG), 565–585 (ATPI…LWVW), 606–626 (FSIE…GLPI), and 656–676 (IFLA…AIMA).

It belongs to the inorganic phosphate transporter (PiT) (TC 2.A.20) family.

It localises to the cell membrane. It carries out the reaction 2 Na(+)(out) + phosphate(out) = 2 Na(+)(in) + phosphate(in). Its function is as follows. Sodium-phosphate symporter which preferentially transports the monovalent form of phosphate with a stoichiometry of two sodium ions per phosphate ion. The sequence is that of Sodium-dependent phosphate transporter 1 (slc20a1) from Xenopus tropicalis (Western clawed frog).